The chain runs to 1828 residues: InaD-like protein (1828 aa).

Residues 5–65 (PAPDKLQVLQ…SIKQLKGQLS (61 aa)) enclose the L27 domain. PDZ domains lie at 134–221 (YIDI…AREP), 248–328 (DVEL…ARDP), and 365–453 (GVEL…VRRK). Phosphoserine occurs at positions 459 and 522. In terms of domain architecture, PDZ 4 spans 553 to 639 (DAELQKYSKL…PFTLVCCRRL (87 aa)). Phosphoserine is present on S645. PDZ domains are found at residues 686 to 758 (IVEL…EVLK) and 1070 to 1162 (IVEI…QSLS). The segment at 1168-1220 (IPSVHNKANKIANNQDQNTEEKKEKRQGTPPPPMKLPPPYKAPSDDSDENEEE) is disordered. Residues 1196–1208 (TPPPPMKLPPPYK) show a composition bias toward pro residues. S1211 carries the phosphoserine modification. Residues 1241-1324 (IIELEKDKNG…KVKLVFIRNE (84 aa)) enclose the PDZ 7 domain. A disordered region spans residues 1333–1362 (APFPVPSSSPSSLEDQSGTEPVSSEEDGSL). Polar residues predominate over residues 1345-1354 (LEDQSGTEPV). PDZ domains follow at residues 1464 to 1547 (IIEI…YRDE) and 1560 to 1642 (PVDL…GRLR). Phosphothreonine is present on T1535. Positions 1645-1668 (SWTSSRKTSQNSQGSQHSTHSSFH) are enriched in polar residues. The segment at 1645 to 1669 (SWTSSRKTSQNSQGSQHSTHSSFHP) is disordered. Positions 1703–1789 (TVEIIRELSD…RIILQVVADT (87 aa)) constitute a PDZ 10 domain. The segment at 1805–1828 (YHLGSPTAEHHPEDTEEPLQMTAG) is disordered.

In terms of assembly, forms a ternary complex with PALS1 and CRB1. Component of a complex whose core is composed of ARHGAP17, AMOT, PALS1, INADL/PATJ and PARD3/PAR3. Forms a heterotrimeric complex composed of MMP5, LIN7B and PATJ; the N-terminal L27 domain of PALS1 interacts with the L27 domain of PATJ and the C-terminal L27 domain of PALS1 interacts with the L27 domain of LIN7B. Component of a complex composed of CRB3, PALS1 and PATJ. As part of the Crumbs complex; interacts with WWP1, the interaction is enhanced by AMOTL2 and facilitates WWP1 localization to the plasma membrane. The Crumbs complex promotes monoubiquitination of AMOTL2 by WWP1, which activates the Hippo signaling pathway. Interacts (via N-terminus) with PALS1/PALS (via PDZ domain). Interacts with TJP3/ZO-3 and CLDN1/claudin-1. Interacts with ASIC3, KCNJ10, KCNJ15, GRIN2A, GRIN2B, GRIN2C, GRIN2D, NLGN2, and HTR2A. Interacts with MPP7. Directly interacts with HTR4. Interacts (via PDZ domain 8) with WWC1 (via the ADDV motif). Interacts with SLC6A4. Interacts (via C-terminus) with ARHGEF18. Interacts with NPHP1. Interacts with PARD3/PAR3. Interacts (via PDZ1-6 domains) with TJP1/ZO1; the interaction is required for attachment and extension of TJP1/ZO1 condensates along the apical cell interface.

It is found in the cell junction. The protein localises to the tight junction. The protein resides in the apical cell membrane. Its subcellular location is the cytoplasm. It localises to the perinuclear region. Scaffolding protein that facilitates the localization of proteins to the cell membrane. Required for the correct formation of tight junctions and epithelial apico-basal polarity. Acts (via its L27 domain) as an apical connector and elongation factor for multistranded TJP1/ZO1 condensates that form a tight junction belt, thereby required for the formation of the tight junction-mediated cell barrier. Positively regulates epithelial cell microtubule elongation and cell migration, possibly via facilitating localization of PRKCI/aPKC and PAR3D/PAR3 at the leading edge of migrating cells. Plays a role in the correct reorientation of the microtubule-organizing center during epithelial migration. May regulate the surface expression and/or function of ASIC3 in sensory neurons. May recruit ARHGEF18 to apical cell-cell boundaries. In Canis lupus familiaris (Dog), this protein is InaD-like protein.